We begin with the raw amino-acid sequence, 345 residues long: GTPase Obg (345 aa).

Residues 1–158 (MFIDSVKITL…RLVRLELKLI (158 aa)) form the Obg domain. One can recognise an OBG-type G domain in the interval 159–339 (ADVGLVGFPN…LKFMLLEEIK (181 aa)). Residues 165–172 (GFPNVGKS), 190–194 (FTTLT), 212–215 (DIPG), 280–283 (SKSD), and 320–322 (SSL) each bind GTP. Mg(2+) contacts are provided by Ser-172 and Thr-192.

Belongs to the TRAFAC class OBG-HflX-like GTPase superfamily. OBG GTPase family. In terms of assembly, monomer. Requires Mg(2+) as cofactor.

The protein localises to the cytoplasm. Functionally, an essential GTPase which binds GTP, GDP and possibly (p)ppGpp with moderate affinity, with high nucleotide exchange rates and a fairly low GTP hydrolysis rate. Plays a role in control of the cell cycle, stress response, ribosome biogenesis and in those bacteria that undergo differentiation, in morphogenesis control. The sequence is that of GTPase Obg from Campylobacter jejuni subsp. jejuni serotype O:6 (strain 81116 / NCTC 11828).